Reading from the N-terminus, the 219-residue chain is Large ribosomal subunit protein bL25 (219 aa).

The interval 193-219 (VSSTELEETPEVPASAVPTTDQGESAE) is disordered. The segment covering 209-219 (VPTTDQGESAE) has biased composition (polar residues).

Belongs to the bacterial ribosomal protein bL25 family. CTC subfamily. Part of the 50S ribosomal subunit; part of the 5S rRNA/L5/L18/L25 subcomplex. Contacts the 5S rRNA. Binds to the 5S rRNA independently of L5 and L18.

Functionally, this is one of the proteins that binds to the 5S RNA in the ribosome where it forms part of the central protuberance. This chain is Large ribosomal subunit protein bL25, found in Legionella pneumophila (strain Corby).